The chain runs to 279 residues: uncharacterized protein (279 aa).

Residues 1-21 (MKIIRTLFLLLIAVYGSSVVA) form the signal peptide.

It to E.coli YfcO.

This is an uncharacterized protein from Salmonella typhimurium (strain LT2 / SGSC1412 / ATCC 700720).